A 224-amino-acid chain; its full sequence is Uridylate kinase (224 aa).

9–10 provides a ligand contact to ATP; the sequence is GS. Residue glycine 43 participates in UMP binding. Residues glycine 44 and arginine 48 each coordinate ATP. Residues aspartate 65 and 113–119 each bind UMP; that span reads VVPGQTT. 3 residues coordinate ATP: threonine 139, phenylalanine 145, and aspartate 148.

Belongs to the UMP kinase family. As to quaternary structure, homohexamer.

The protein resides in the cytoplasm. The catalysed reaction is UMP + ATP = UDP + ADP. The protein operates within pyrimidine metabolism; CTP biosynthesis via de novo pathway; UDP from UMP (UMPK route): step 1/1. Its activity is regulated as follows. Inhibited by UTP. Functionally, catalyzes the reversible phosphorylation of UMP to UDP. This chain is Uridylate kinase, found in Methanocella arvoryzae (strain DSM 22066 / NBRC 105507 / MRE50).